The primary structure comprises 1019 residues: Alpha-mannosidase At3g26720 (1019 aa).

The N-terminal stretch at 1–22 (MAVKCFSLYLILAAIVIGGVTS) is a signal peptide. H47 and D49 together coordinate Zn(2+). The N-linked (GlcNAc...) asparagine glycan is linked to N64. Residue D169 participates in Zn(2+) binding. N-linked (GlcNAc...) asparagine glycans are attached at residues N278 and N336. H410 serves as a coordination point for Zn(2+). A disulfide bridge connects residues C466 and C474. N470, N638, N730, and N820 each carry an N-linked (GlcNAc...) asparagine glycan. An intrachain disulfide couples C824 to C829.

It belongs to the glycosyl hydrolase 38 family. As to quaternary structure, homodimer. Requires Zn(2+) as cofactor.

It catalyses the reaction Hydrolysis of terminal, non-reducing alpha-D-mannose residues in alpha-D-mannosides.. Liberates mannose from p-nitrophenyl-alpha-D-mannoside in vitro. In Arabidopsis thaliana (Mouse-ear cress), this protein is Alpha-mannosidase At3g26720.